The following is a 90-amino-acid chain: MKVSVAALAVLLIAICYQTSAAPVGSDPPTSCCFTYISRQLPFSFVADYYETNSQCPHAGVVFITRKGREVCANPENDWVQDYMNKLELN.

A signal peptide spans 1–21 (MKVSVAALAVLLIAICYQTSA). Intrachain disulfides connect Cys-32–Cys-56 and Cys-33–Cys-72.

This sequence belongs to the intercrine beta (chemokine CC) family. Homodimer.

Its subcellular location is the secreted. Functionally, monokine with inflammatory and chemokinetic properties. This Gallus gallus (Chicken) protein is C-C motif chemokine 4 homolog (CCL4).